A 360-amino-acid chain; its full sequence is UPF0283 membrane protein Asuc_0957 (360 aa).

3 helical membrane-spanning segments follow: residues 74-94 (VIAVAVLFLGATVAQSVQWLI), 102-122 (WIYFAFAVVGCSVVGLGLSAL), and 215-235 (AVENGIVVAISPLAIVDMLFL).

Belongs to the UPF0283 family.

It is found in the cell inner membrane. This is UPF0283 membrane protein Asuc_0957 from Actinobacillus succinogenes (strain ATCC 55618 / DSM 22257 / CCUG 43843 / 130Z).